Consider the following 457-residue polypeptide: Transmembrane protease serine 5 (457 aa).

The interval 1–21 (MSLMLDDQPPMEAQYAEEGPG) is disordered. The Cytoplasmic portion of the chain corresponds to 1–49 (MSLMLDDQPPMEAQYAEEGPGPGIFRAEPGDQQHPISQAVCWRSMRRGC). The helical; Signal-anchor for type II membrane protein transmembrane segment at 50 to 70 (AVLGALGLLAGAGVGSWLLVL) threads the bilayer. The Extracellular portion of the chain corresponds to 71–457 (YLCPAASQPI…IHDTAQDSLL (387 aa)). The SRCR domain occupies 112–207 (FRINSEDFLL…SGQVVSLRCS (96 aa)). Disulfide bonds link cysteine 135–cysteine 196, cysteine 148–cysteine 206, cysteine 209–cysteine 328, cysteine 243–cysteine 259, cysteine 342–cysteine 411, cysteine 374–cysteine 390, and cysteine 401–cysteine 429. N-linked (GlcNAc...) asparagine glycosylation is found at asparagine 163, asparagine 170, and asparagine 195. Positions 218-453 (IVGGQSVAPG…FLDWIHDTAQ (236 aa)) constitute a Peptidase S1 domain. Active-site charge relay system residues include histidine 258 and aspartate 308. Residues asparagine 319 and asparagine 375 are each glycosylated (N-linked (GlcNAc...) asparagine). Catalysis depends on serine 405, which acts as the Charge relay system.

The protein belongs to the peptidase S1 family. As to expression, brain-specific. Predominantly expressed in neurons, in their axons, and at the synapses of motoneurons in the spinal cord.

The protein localises to the cell membrane. May play a role in hearing. This is Transmembrane protease serine 5 (TMPRSS5) from Homo sapiens (Human).